A 413-amino-acid chain; its full sequence is Multifunctional CCA protein (413 aa).

ATP contacts are provided by G8 and R11. CTP contacts are provided by G8 and R11. Residues D21 and D23 each contribute to the Mg(2+) site. Residues R91, R137, and R140 each contribute to the ATP site. 3 residues coordinate CTP: R91, R137, and R140. Residues T228–W329 enclose the HD domain.

The protein belongs to the tRNA nucleotidyltransferase/poly(A) polymerase family. Bacterial CCA-adding enzyme type 1 subfamily. Monomer. Can also form homodimers and oligomers. It depends on Mg(2+) as a cofactor. Ni(2+) is required as a cofactor.

The catalysed reaction is a tRNA precursor + 2 CTP + ATP = a tRNA with a 3' CCA end + 3 diphosphate. It carries out the reaction a tRNA with a 3' CCA end + 2 CTP + ATP = a tRNA with a 3' CCACCA end + 3 diphosphate. Its function is as follows. Catalyzes the addition and repair of the essential 3'-terminal CCA sequence in tRNAs without using a nucleic acid template. Adds these three nucleotides in the order of C, C, and A to the tRNA nucleotide-73, using CTP and ATP as substrates and producing inorganic pyrophosphate. tRNA 3'-terminal CCA addition is required both for tRNA processing and repair. Also involved in tRNA surveillance by mediating tandem CCA addition to generate a CCACCA at the 3' terminus of unstable tRNAs. While stable tRNAs receive only 3'-terminal CCA, unstable tRNAs are marked with CCACCA and rapidly degraded. The chain is Multifunctional CCA protein from Klebsiella pneumoniae subsp. pneumoniae (strain ATCC 700721 / MGH 78578).